The following is a 51-amino-acid chain: Magnetosome protein Mms5 (51 aa).

At M1–S8 the chain is on the lumenal side. The tract at residues L9–G16 is LG region. The chain crosses the membrane as a helical span at residues L9–A29. Residues G30–V51 are Cytoplasmic-facing.

The protein belongs to the magnetosome MamD/Mms5 family. Post-translationally, may undergo N-terminal cleavage.

The protein localises to the magnetosome membrane. Might be involved in magnetite crystal growth. The sequence is that of Magnetosome protein Mms5 from Magnetospirillum gryphiswaldense (strain DSM 6361 / JCM 21280 / NBRC 15271 / MSR-1).